An 831-amino-acid chain; its full sequence is AMP deaminase (831 aa).

Disordered stretches follow at residues 26–45 (NPGA…QDTP), 66–110 (NGTQ…KLLN), and 130–149 (NAVV…METT). 2 positions are modified to phosphoserine: serine 79 and serine 84. Positions 319 and 321 each coordinate Zn(2+). Residues histidine 321 and 390–395 (KFNLKY) each bind substrate. Histidine 587 is a Zn(2+) binding site. Position 590 (glutamate 590) interacts with substrate. The active-site Proton acceptor is histidine 609. Aspartate 664 contacts Zn(2+). Position 665–668 (665–668 (DPLQ)) interacts with substrate. Phosphoserine is present on residues serine 758, serine 776, serine 780, and serine 782.

This sequence belongs to the metallo-dependent hydrolases superfamily. Adenosine and AMP deaminases family. As to quaternary structure, homotetramer. It depends on Zn(2+) as a cofactor.

The protein localises to the cytoplasm. The catalysed reaction is AMP + H2O + H(+) = IMP + NH4(+). Its pathway is purine metabolism; IMP biosynthesis via salvage pathway; IMP from AMP: step 1/1. Functionally, AMP deaminase plays a critical role in energy metabolism. This Schizosaccharomyces pombe (strain 972 / ATCC 24843) (Fission yeast) protein is AMP deaminase (ada1).